A 117-amino-acid chain; its full sequence is Huntingtin-interacting protein M (117 aa).

Composition is skewed to basic and acidic residues over residues 1 to 11 and 83 to 97; these read MSEKKSQEKPC and QDRERQRDNDREPSR. 2 disordered regions span residues 1 to 25 and 74 to 117; these read MSEKKSQEKPCSDNNQIEDPSSRPE and NINN…RRNG.

As to quaternary structure, may interact with the N-terminus of HD.

This chain is Huntingtin-interacting protein M, found in Mus musculus (Mouse).